The primary structure comprises 280 residues: Bifunctional protein FolD (280 aa).

NADP(+)-binding positions include 158-160, I183, and I222; that span reads GES.

The protein belongs to the tetrahydrofolate dehydrogenase/cyclohydrolase family. Homodimer.

The enzyme catalyses (6R)-5,10-methylene-5,6,7,8-tetrahydrofolate + NADP(+) = (6R)-5,10-methenyltetrahydrofolate + NADPH. The catalysed reaction is (6R)-5,10-methenyltetrahydrofolate + H2O = (6R)-10-formyltetrahydrofolate + H(+). Its pathway is one-carbon metabolism; tetrahydrofolate interconversion. In terms of biological role, catalyzes the oxidation of 5,10-methylenetetrahydrofolate to 5,10-methenyltetrahydrofolate and then the hydrolysis of 5,10-methenyltetrahydrofolate to 10-formyltetrahydrofolate. The polypeptide is Bifunctional protein FolD (Mycoplasma mobile (strain ATCC 43663 / 163K / NCTC 11711) (Mesomycoplasma mobile)).